The chain runs to 602 residues: Beta-(1--&gt;2)glucan export ATP-binding/permease protein NdvA (602 aa).

The region spanning 21-311 (GWTLAVANLL…VVSFVNSLMM (291 aa)) is the ABC transmembrane type-1 domain. Transmembrane regions (helical) follow at residues 22–42 (WTLAVANLLLATAQFAEPVLF), 68–88 (LLAAWVGFGLFTILCSATVAL), 146–166 (EHFAAILSLVVLLPLSLYINW), 167–187 (RLAILLFALCGVFTVLTTLVV), 254–274 (VITRASTTITVLAIFSLGIAL), and 276–296 (QQGLTSVGEIVMFVSFATLLI). Residues 345–579 (VEFLDVSFSY…RGRFAELARA (235 aa)) form the ABC transporter domain. ATP is bound at residue 378–385 (GATGAGKS).

It belongs to the ABC transporter superfamily. Beta-(1--&gt;2)glucan exporter (TC 3.A.1.108.1) family. In terms of assembly, homodimer.

It localises to the cell inner membrane. The catalysed reaction is [(1-&gt;2)-beta-D-glucosyl](n)(in) + ATP + H2O = [(1-&gt;2)-beta-D-glucosyl](n)(out) + ADP + phosphate + H(+). In terms of biological role, involved in beta-(1--&gt;2)glucan export. Transmembrane domains (TMD) form a pore in the inner membrane and the ATP-binding domain (NBD) is responsible for energy generation. This Rhodopseudomonas palustris (strain BisB5) protein is Beta-(1--&gt;2)glucan export ATP-binding/permease protein NdvA.